A 420-amino-acid polypeptide reads, in one-letter code: MKYRRIKGTNDIFGEEIWYWRYVEETFRNVCESAGIEEIRTPIFEQTELFVRSVGEESDIVQKEMYTFQDKAGRSITLRPEGTAPVVRAFLENSLIDRGFQQRYYYIGPMFRYEKPQSGRLRQFHQVGFEIIGPESPKADFEVIMLVDTFLRRLGLTKYKIHLNSIGCPVCRKNYREALKEYYGRILDNLCDDCKRRYETNILRLLDCKVDHEYSLNAPKSVDYLCDSCRAHYKKLKEYLNTFEIEYVEDHTLVRGLDYYTRTVFEVRHEGLGAQSAIAGGGRYDGLFAELGGSSVPALGFAGGIERIILALKAEGIEIPMKNVHLVYIATLGEKAFMDGVRLAGELRKKGLSVDVDIMDRKLSGQLKHASRMGSRYAVIIGDEELEKGIVILRDLETGDQVEIDRDFAADYIAERVSKD.

This sequence belongs to the class-II aminoacyl-tRNA synthetase family. In terms of assembly, homodimer.

The protein localises to the cytoplasm. It catalyses the reaction tRNA(His) + L-histidine + ATP = L-histidyl-tRNA(His) + AMP + diphosphate + H(+). This is Histidine--tRNA ligase (hisS) from Thermotoga maritima (strain ATCC 43589 / DSM 3109 / JCM 10099 / NBRC 100826 / MSB8).